The primary structure comprises 930 residues: A disintegrin and metalloproteinase with thrombospondin motifs 5 (930 aa).

The signal sequence occupies residues 1-21; sequence MRLEWAPLLLLLLLLSASCLS. The propeptide occupies 22 to 261; sequence LAADSPAAAP…PQTWWRRRRR (240 aa). Positions 31–53 are enriched in low complexity; sequence PAQDKTRQPQAAAAAAEPDQPQG. 2 disordered regions span residues 31 to 68 and 207 to 231; these read PAQDKTRQPQAAAAAAEPDQPQGEETRERGHLQPLAGQ and ASCETPASPSGPQESPSVHSRSRRR. The Cysteine switch signature appears at 207 to 214; that stretch reads ASCETPAS. Cys209 provides a ligand contact to Zn(2+). A compositionally biased stretch (polar residues) spans 211 to 225; that stretch reads TPASPSGPQESPSVH. Positions 267–476 constitute a Peptidase M12B domain; sequence RQVELLLVAD…GHGNCLLDLP (210 aa). 8 disulfides stabilise this stretch: Cys342-Cys394, Cys371-Cys376, Cys388-Cys471, Cys426-Cys455, Cys497-Cys519, Cys508-Cys529, Cys514-Cys548, and Cys542-Cys553. Residue His410 participates in Zn(2+) binding. Residue Glu411 is part of the active site. Residues His414 and His420 each contribute to the Zn(2+) site. The Disintegrin domain maps to 485-566; the sequence is ELPGQTYDAT…TKKKYYSTSS (82 aa). Asn498 is a glycosylation site (N-linked (GlcNAc...) asparagine). The TSP type-1 1 domain occupies 567–622; that stretch reads HGNWGSWGPWGQCSRSCGGGVQFAYRHCNNPAPRNSGRYCTGKRAIYRSCSVTPCP. Trp570 and Trp573 each carry a C-linked (Man) tryptophan glycan. Intrachain disulfides connect Cys579–Cys616, Cys583–Cys621, and Cys594–Cys606. An O-linked (Fuc...) serine glycan is attached at Ser582. N-linked (GlcNAc...) asparagine glycosylation is found at Asn728, Asn802, and Asn807. Positions 732-874 are spacer; that stretch reads TKIIGTFNKK…HGSNKVGPHS (143 aa). Positions 875–929 constitute a TSP type-1 2 domain; the sequence is TQLQWVTGPWLACSRTCDTGWHTRTVQCQDGNRKLAKGCLLSQRPSAFKQCLLKK.

The cofactor is Zn(2+). The precursor is cleaved by furin and PCSK7 outside of the cell. Post-translationally, glycosylated. Can be O-fucosylated by POFUT2 on a serine or a threonine residue found within the consensus sequence C1-X(2)-(S/T)-C2-G of the TSP type-1 repeat domains where C1 and C2 are the first and second cysteine residue of the repeat, respectively. Fucosylated repeats can then be further glycosylated by the addition of a beta-1,3-glucose residue by the glucosyltransferase, B3GALTL. Fucosylation mediates the efficient secretion of ADAMTS family members. Can also be C-glycosylated with one or two mannose molecules on tryptophan residues within the consensus sequence W-X-X-W of the TPRs, and N-glycosylated. These other glycosylations can also facilitate secretion. As to expression, expressed in skeletal muscle.

The protein localises to the secreted. Its subcellular location is the extracellular space. It localises to the extracellular matrix. Its function is as follows. Metalloproteinase that plays an important role in connective tissue organization, development, inflammation and cell migration. Extracellular matrix (ECM) degrading enzyme that shows proteolytic activity toward the hyalectan group of chondroitin sulfate proteoglycans (CSPGs) including ACAN, VCAN, BCAN and NCAN. Cleavage within the hyalectans occurs at Glu-Xaa recognition motifs. Plays a role in embryonic development, including limb and cardiac morphogenesis, and skeletal muscle development through its VCAN remodeling properties. Cleaves VCAN in the pericellular matrix surrounding myoblasts, facilitating myoblast contact and fusion which is required for skeletal muscle development and regeneration. Participates in the development of brown adipose tissue and browning of white adipose tissue. Plays an important role for T-lymphocyte migration from draining lymph nodes following viral infection. The chain is A disintegrin and metalloproteinase with thrombospondin motifs 5 (Adamts5) from Mus musculus (Mouse).